The following is a 391-amino-acid chain: 3-ketoacyl-CoA thiolase (391 aa).

C95 serves as the catalytic Acyl-thioester intermediate. Catalysis depends on proton acceptor residues H347 and C377.

This sequence belongs to the thiolase-like superfamily. Thiolase family. In terms of assembly, heterotetramer of two alpha chains (FadB) and two beta chains (FadA).

It localises to the cytoplasm. It carries out the reaction an acyl-CoA + acetyl-CoA = a 3-oxoacyl-CoA + CoA. It functions in the pathway lipid metabolism; fatty acid beta-oxidation. Its function is as follows. Catalyzes the final step of fatty acid oxidation in which acetyl-CoA is released and the CoA ester of a fatty acid two carbons shorter is formed. The sequence is that of 3-ketoacyl-CoA thiolase from Ectopseudomonas oleovorans (Pseudomonas oleovorans).